The primary structure comprises 86 residues: Cytochrome c6 (86 aa).

Residues Cys-14, Cys-17, His-18, and Met-58 each coordinate heme c.

Belongs to the cytochrome c family. PetJ subfamily. As to quaternary structure, monomer. Post-translationally, binds 1 heme c group covalently per subunit.

The protein resides in the plastid. Its subcellular location is the chloroplast thylakoid lumen. Functionally, functions as an electron carrier between membrane-bound cytochrome b6-f and photosystem I in oxygenic photosynthesis. This is Cytochrome c6 (petJ) from Alaria esculenta (Irish wakame).